The primary structure comprises 325 residues: MAAAAASLRGVVLGPRGAGLPGARARGLLCSARPGQLPLRTPQAVALSSKSGLSRGRKVMLSALGMLAAGGAGLAMALHSAVSASDLELHPPSYPWSHRGLLSSLDHTSIRRGFQVYKQVCASCHSMDFVAYRHLVGVCYTEDEAKELAAEVEVQDGPNEDGEMFMRPGKLFDYFPKPYPNSEAARAANNGALPPDLSYIVRARHGGEDYVFSLLTGYCEPPTGVSLREGLYFNPYFPGQAIAMAPPIYTDVLEFDDGTPATMSQIAKDVCTFLRWASEPEHDHRKRMGLKMLMMMALLVPLVYTIKRHKWSVLKSRKLAYRPPK.

The transit peptide at M1–A84 directs the protein to the mitochondrion. At S85–E281 the chain is on the mitochondrial intermembrane side. A Cytochrome c domain is found at T108–D209. 3 residues coordinate heme c: C121, C124, and H125. Residue S182 is modified to Phosphoserine. M244 is a binding site for heme c. A helical transmembrane segment spans residues H282 to K315. Residues S316–K325 lie on the Mitochondrial matrix side of the membrane.

The protein belongs to the cytochrome c family. In terms of assembly, component of the ubiquinol-cytochrome c oxidoreductase (cytochrome b-c1 complex, complex III, CIII), a multisubunit enzyme composed of 11 subunits. The complex is composed of 3 respiratory subunits cytochrome b, cytochrome c1 and Rieske protein UQCRFS1, 2 core protein subunits UQCRC1/QCR1 and UQCRC2/QCR2, and 6 low-molecular weight protein subunits UQCRH/QCR6, UQCRB/QCR7, UQCRQ/QCR8, UQCR10/QCR9, UQCR11/QCR10 and subunit 9, the cleavage product of Rieske protein UQCRFS1. The complex exists as an obligatory dimer and forms supercomplexes (SCs) in the inner mitochondrial membrane with NADH-ubiquinone oxidoreductase (complex I, CI) and cytochrome c oxidase (complex IV, CIV), resulting in different assemblies (supercomplex SCI(1)III(2)IV(1) and megacomplex MCI(2)III(2)IV(2)). Interacts with FLVCR2; this interaction occurs in the absence of heme and is disrupted upon heme binding. Heme c serves as cofactor.

The protein localises to the mitochondrion inner membrane. It catalyses the reaction a quinol + 2 Fe(III)-[cytochrome c](out) = a quinone + 2 Fe(II)-[cytochrome c](out) + 2 H(+)(out). Functionally, component of the ubiquinol-cytochrome c oxidoreductase, a multisubunit transmembrane complex that is part of the mitochondrial electron transport chain which drives oxidative phosphorylation. The respiratory chain contains 3 multisubunit complexes succinate dehydrogenase (complex II, CII), ubiquinol-cytochrome c oxidoreductase (cytochrome b-c1 complex, complex III, CIII) and cytochrome c oxidase (complex IV, CIV), that cooperate to transfer electrons derived from NADH and succinate to molecular oxygen, creating an electrochemical gradient over the inner membrane that drives transmembrane transport and the ATP synthase. The cytochrome b-c1 complex catalyzes electron transfer from ubiquinol to cytochrome c, linking this redox reaction to translocation of protons across the mitochondrial inner membrane, with protons being carried across the membrane as hydrogens on the quinol. In the process called Q cycle, 2 protons are consumed from the matrix, 4 protons are released into the intermembrane space and 2 electrons are passed to cytochrome c. Cytochrome c1 is a catalytic core subunit containing a c-type heme. It transfers electrons from the [2Fe-2S] iron-sulfur cluster of the Rieske protein to cytochrome c. The protein is Cytochrome c1, heme protein, mitochondrial (CYC1) of Homo sapiens (Human).